We begin with the raw amino-acid sequence, 881 residues long: Serine/threonine-protein phosphatase 6 regulatory subunit 1 (881 aa).

Residues 10–403 form an interaction with PPP6C region; that stretch reads SSHLDTLLER…VFNNFLHAQV (394 aa). Phosphoserine is present on Ser-232. Thr-524 is subject to Phosphothreonine. Phosphoserine is present on residues Ser-529, Ser-530, Ser-531, Ser-635, and Ser-638. Composition is skewed to acidic residues over residues 621–642 and 669–686; these read DDDE…DGED and DSED…DEEG. Residues 621-881 are disordered; it reads DDDEEEEDEE…PEGPASPGSQ (261 aa). Over residues 700–710 the composition is skewed to pro residues; that stretch reads YPSPGPQPPGP. Residues Ser-702, Ser-726, and Ser-759 each carry the phosphoserine modification. The segment covering 814–830 has biased composition (polar residues); it reads APSSSDSATRDPSTSVP. Position 846 is a phosphoserine (Ser-846).

The protein belongs to the SAPS family. In terms of assembly, protein phosphatase 6 (PP6) holoenzyme is proposed to be a heterotrimeric complex formed of the catalytic subunit, a SAPS domain-containing subunit (PP6R) and an ankyrin repeat-domain containing regulatory subunit (ARS). Interacts with PPP6C and NFKBIE. Interacts with ANKRD28, ANKRD44 and ANKRD52. In terms of tissue distribution, ubiquitous with higher expression in testis.

The protein resides in the cytoplasm. Functionally, regulatory subunit of protein phosphatase 6 (PP6). May function as a scaffolding PP6 subunit. Involved in the PP6-mediated dephosphorylation of NFKBIE opposing its degradation in response to TNF-alpha. The protein is Serine/threonine-protein phosphatase 6 regulatory subunit 1 (PPP6R1) of Homo sapiens (Human).